Consider the following 105-residue polypeptide: uncharacterized protein (105 aa).

The segment covering 1 to 11 (MPHRNDRRKSA) has biased composition (basic residues). Positions 1–20 (MPHRNDRRKSASKAPNAIIH) are disordered.

The protein belongs to the ALB1 family.

The protein localises to the nucleus. Its subcellular location is the nucleolus. This is an uncharacterized protein from Schizosaccharomyces pombe (strain 972 / ATCC 24843) (Fission yeast).